A 380-amino-acid polypeptide reads, in one-letter code: Tryptophan 2,3-dioxygenase (380 aa).

Residues 57-61 (FIITH) and Arg128 each bind substrate. Residue His313 coordinates heme. Position 328 (Thr328) interacts with substrate.

It belongs to the tryptophan 2,3-dioxygenase family. As to quaternary structure, homotetramer. Dimer of dimers. The cofactor is heme.

It carries out the reaction L-tryptophan + O2 = N-formyl-L-kynurenine. Its pathway is amino-acid degradation; L-tryptophan degradation via kynurenine pathway; L-kynurenine from L-tryptophan: step 1/2. It functions in the pathway pigment biosynthesis; ommochrome biosynthesis. In terms of biological role, heme-dependent dioxygenase that catalyzes the oxidative cleavage of the L-tryptophan (L-Trp) pyrrole ring and converts L-tryptophan to N-formyl-L-kynurenine. Catalyzes the oxidative cleavage of the indole moiety. This chain is Tryptophan 2,3-dioxygenase, found in Drosophila willistoni (Fruit fly).